Here is a 247-residue protein sequence, read N- to C-terminus: 1-(5-phosphoribosyl)-5-[(5-phosphoribosylamino)methylideneamino] imidazole-4-carboxamide isomerase (247 aa).

Asp8 acts as the Proton acceptor in catalysis. The active-site Proton donor is Asp129.

Belongs to the HisA/HisF family.

The protein resides in the cytoplasm. It carries out the reaction 1-(5-phospho-beta-D-ribosyl)-5-[(5-phospho-beta-D-ribosylamino)methylideneamino]imidazole-4-carboxamide = 5-[(5-phospho-1-deoxy-D-ribulos-1-ylimino)methylamino]-1-(5-phospho-beta-D-ribosyl)imidazole-4-carboxamide. It functions in the pathway amino-acid biosynthesis; L-histidine biosynthesis; L-histidine from 5-phospho-alpha-D-ribose 1-diphosphate: step 4/9. The protein is 1-(5-phosphoribosyl)-5-[(5-phosphoribosylamino)methylideneamino] imidazole-4-carboxamide isomerase of Bradyrhizobium sp. (strain BTAi1 / ATCC BAA-1182).